Here is a 365-residue protein sequence, read N- to C-terminus: Aspartate-semialdehyde dehydrogenase (365 aa).

Thr-13, Gly-14, Ser-15, Val-16, Ser-38, Ser-41, Leu-85, and Asp-86 together coordinate NADP(+). Thr-13 carries the phosphothreonine modification. Residue Cys-156 is the Acyl-thioester intermediate of the active site. Gly-188 is an NADP(+) binding site. Catalysis depends on His-256, which acts as the Proton acceptor. Residues Ser-318 and Ser-323 each carry the phosphoserine modification. Residue Asn-343 coordinates NADP(+).

It belongs to the aspartate-semialdehyde dehydrogenase family. In terms of assembly, homotetramer.

The protein localises to the cytoplasm. Its subcellular location is the cytosol. The protein resides in the nucleus. It catalyses the reaction L-aspartate 4-semialdehyde + phosphate + NADP(+) = 4-phospho-L-aspartate + NADPH + H(+). Its pathway is amino-acid biosynthesis; L-methionine biosynthesis via de novo pathway; L-homoserine from L-aspartate: step 2/3. The protein operates within amino-acid biosynthesis; L-threonine biosynthesis; L-threonine from L-aspartate: step 2/5. Catalyzes the NADPH-dependent formation of L-aspartate 4-semialdehyde (L-ASA) by the reductive dephosphorylation of 4-phospho-L-aspartate. Mediates the second step in the biosynthesis of amino acids that derive from aspartate (the aspartate family of amino acids), including methioinine and threonine, the latter of which is a precursor to isoleucine. In Saccharomyces cerevisiae (strain ATCC 204508 / S288c) (Baker's yeast), this protein is Aspartate-semialdehyde dehydrogenase (HOM2).